The primary structure comprises 381 residues: Outer membrane protein assembly factor BamB (381 aa).

Residues M1 to A22 form the signal peptide. The N-palmitoyl cysteine moiety is linked to residue C23. The S-diacylglycerol cysteine moiety is linked to residue C23.

The protein belongs to the BamB family. In terms of assembly, part of the Bam complex.

It is found in the cell outer membrane. Functionally, part of the outer membrane protein assembly complex, which is involved in assembly and insertion of beta-barrel proteins into the outer membrane. The chain is Outer membrane protein assembly factor BamB from Burkholderia pseudomallei (strain K96243).